The primary structure comprises 447 residues: GTPase Der (447 aa).

2 EngA-type G domains span residues 3–167 (PVIA…VQER) and 181–354 (VKIA…AAAM). Residues 9–16 (GRPNVGKS), 56–60 (DTGGF), 119–122 (NKAE), 187–194 (GRPNVGKS), 234–238 (DTAGL), and 299–302 (NKWD) each bind GTP. The KH-like domain occupies 355–439 (VKLPTPQLTR…PLRIEFRTNK (85 aa)).

Belongs to the TRAFAC class TrmE-Era-EngA-EngB-Septin-like GTPase superfamily. EngA (Der) GTPase family. As to quaternary structure, associates with the 50S ribosomal subunit.

GTPase that plays an essential role in the late steps of ribosome biogenesis. This chain is GTPase Der, found in Cupriavidus taiwanensis (strain DSM 17343 / BCRC 17206 / CCUG 44338 / CIP 107171 / LMG 19424 / R1) (Ralstonia taiwanensis (strain LMG 19424)).